The chain runs to 228 residues: MFRKLSVEFLGTFWLVLGGCGSAVLAAAFPEVGIGLLGVSFAFGLTVLTMAYAVGGISGGHFNPAVSVGLAVAGRMPPASLVGYILAQVTGAIAAAAVLYVIASGKADFQLGGFAANGYGEHSPGGYSLTAALVTEVVMTAFFLLIILGSTHSRVPVGFAPIAIGLGLTLIHLVSIPVTNTSVNPARSTGQALFVGDWAISQLWLFWVAPLIGAVIAGIVWKIVGDDS.

2 consecutive transmembrane segments (helical) span residues 9–29 and 34–54; these read FLGT…AAAF and IGLL…AYAV. The NPA 1 motif lies at 63–65; the sequence is NPA. Helical transmembrane passes span 82–102, 129–149, and 156–176; these read VGYI…LYVI, LTAA…IILG, and PVGF…LVSI. An NPA 2 motif is present at residues 184 to 186; it reads NPA. Residues 204–224 traverse the membrane as a helical segment; the sequence is WLFWVAPLIGAVIAGIVWKIV.

Belongs to the MIP/aquaporin (TC 1.A.8) family. As to quaternary structure, homotetramer.

It localises to the cell inner membrane. It carries out the reaction H2O(in) = H2O(out). Its function is as follows. Channel that permits osmotically driven movement of water in both directions. It is involved in the osmoregulation and in the maintenance of cell turgor during volume expansion in rapidly growing cells. It mediates rapid entry or exit of water in response to abrupt changes in osmolarity. The protein is Aquaporin Z 1 of Rhizobium meliloti (strain 1021) (Ensifer meliloti).